Reading from the N-terminus, the 95-residue chain is uncharacterized protein (95 aa).

The signal sequence occupies residues 1–21; the sequence is MKVLSISLIFFALLLTGCSQV.

This is an uncharacterized protein from Archaeoglobus fulgidus (strain ATCC 49558 / DSM 4304 / JCM 9628 / NBRC 100126 / VC-16).